The sequence spans 494 residues: Cytochrome P450 2A10 (494 aa).

An N6-acetyllysine modification is found at Lys-379. Cys-439 lines the heme pocket.

This sequence belongs to the cytochrome P450 family. It depends on heme as a cofactor. In terms of tissue distribution, expressed in liver and lung as well as in nasal tissues.

It is found in the endoplasmic reticulum membrane. The protein resides in the microsome membrane. It carries out the reaction an organic molecule + reduced [NADPH--hemoprotein reductase] + O2 = an alcohol + oxidized [NADPH--hemoprotein reductase] + H2O + H(+). Functionally, catalyzes the oxygenation of a variety of substrates, including ethanol and procarcinogens such as N-nitrosodiethylamine and phenacetin. Exhibits a high coumarin 7-hydroxylase activity. Converts also testosterone to androstenedione. The protein is Cytochrome P450 2A10 (CYP2A10) of Oryctolagus cuniculus (Rabbit).